The sequence spans 466 residues: ATP synthase subunit beta (466 aa).

ATP is bound at residue 148 to 155; it reads GGAGVGKT.

This sequence belongs to the ATPase alpha/beta chains family. In terms of assembly, F-type ATPases have 2 components, CF(1) - the catalytic core - and CF(0) - the membrane proton channel. CF(1) has five subunits: alpha(3), beta(3), gamma(1), delta(1), epsilon(1). CF(0) has three main subunits: a(1), b(2) and c(9-12). The alpha and beta chains form an alternating ring which encloses part of the gamma chain. CF(1) is attached to CF(0) by a central stalk formed by the gamma and epsilon chains, while a peripheral stalk is formed by the delta and b chains.

The protein resides in the cell inner membrane. It carries out the reaction ATP + H2O + 4 H(+)(in) = ADP + phosphate + 5 H(+)(out). Produces ATP from ADP in the presence of a proton gradient across the membrane. The catalytic sites are hosted primarily by the beta subunits. The sequence is that of ATP synthase subunit beta from Herminiimonas arsenicoxydans.